The primary structure comprises 183 residues: Probable RNA 2'-phosphotransferase (183 aa).

The protein belongs to the KptA/TPT1 family.

Removes the 2'-phosphate from RNA via an intermediate in which the phosphate is ADP-ribosylated by NAD followed by a presumed transesterification to release the RNA and generate ADP-ribose 1''-2''-cyclic phosphate (APPR&gt;P). May function as an ADP-ribosylase. This is Probable RNA 2'-phosphotransferase from Clostridium perfringens (strain 13 / Type A).